A 344-amino-acid chain; its full sequence is N-lysine methyltransferase KMT5A-A (344 aa).

Positions 143–176 are disordered; that stretch reads TSSKHRKPARRKVKRSTKRAAESKSPANRKVTDY. A compositionally biased stretch (basic residues) spans 145-160; the sequence is SKHRKPARRKVKRSTK. Residues 208–329 form the SET domain; the sequence is DGMMVRFIEG…EGEELLYDYG (122 aa). Residues 218-220, Tyr-263, and 290-291 contribute to the S-adenosyl-L-methionine site; these read KGR and NH.

The protein belongs to the class V-like SAM-binding methyltransferase superfamily. Histone-lysine methyltransferase family. PR/SET subfamily.

It localises to the nucleus. It is found in the chromosome. It carries out the reaction L-lysyl(20)-[histone H4] + S-adenosyl-L-methionine = N(6)-methyl-L-lysyl(20)-[histone H4] + S-adenosyl-L-homocysteine + H(+). The catalysed reaction is L-lysyl-[protein] + S-adenosyl-L-methionine = N(6)-methyl-L-lysyl-[protein] + S-adenosyl-L-homocysteine + H(+). Protein-lysine N-methyltransferase that monomethylates both histones and non-histone proteins. Specifically monomethylates 'Lys-20' of histone H4 (H4K20me1). H4K20me1 is enriched during mitosis and represents a specific tag for epigenetic transcriptional repression. Mainly functions in euchromatin regions, thereby playing a central role in the silencing of euchromatic genes. Required for cell proliferation, probably by contributing to the maintenance of proper higher-order structure of DNA during mitosis. Involved in chromosome condensation and proper cytokinesis. In Danio rerio (Zebrafish), this protein is N-lysine methyltransferase KMT5A-A.